Reading from the N-terminus, the 604-residue chain is MTDAPVSRLRNFCIIAHIDHGKSTLADRLLQDTGTVADRDMQAQFLDNMDLERERGITIKLQAARMQFKAADGELYTLNLIDTPGHVDFSYEVSRSLQACEGALLVVDASQGVEAQTLANVYLALGNDLEIIPVLNKIDLPGADAERISTEIEEIIGLDTSNAIHCSAKTGLGVPEILQAIVDRVPAPPDTTEEPLKALIFDSYYDPYRGVIVYFRVVSGRLRKKDKVLLMASKKTYELDEIGVMSPDQKQVDELHAGEVGYLAASIKAVADARVGDTITLASAPAEEPLPGYTEAKPMVFCGLFPTDADQYPDLRDALDKLKLSDAALKYEPETSSAMGFGFRCGFLGLLHMEIVQERLEREYDLDLIVTAPSVIYKVNMADGSTVMVDNPATLPEPQARESIEEPYVKMEIYAPNSFNGTLMELCQERRGTFIDMKYITTDRVTLQYELPLAEVVTDFFDQMKSRTKGYASMEYSLIGYRQNVLVRLDVLINGDKADPLTTIVHRDKAYGVGKGLVEKLKELIPRQQFKIPLQASIGSRIIASESISAMRKDVLAKCYGGDISRKKKLLKKQAKGKKRMKAMGKVDVPQEAFMAVLKLNENK.

Residues 7–190 (SRLRNFCIIA…IVDRVPAPPD (184 aa)) form the tr-type G domain. GTP is bound by residues 19–24 (DHGKST) and 136–139 (NKID).

The protein belongs to the TRAFAC class translation factor GTPase superfamily. Classic translation factor GTPase family. LepA subfamily.

The protein localises to the cell inner membrane. The enzyme catalyses GTP + H2O = GDP + phosphate + H(+). Required for accurate and efficient protein synthesis under certain stress conditions. May act as a fidelity factor of the translation reaction, by catalyzing a one-codon backward translocation of tRNAs on improperly translocated ribosomes. Back-translocation proceeds from a post-translocation (POST) complex to a pre-translocation (PRE) complex, thus giving elongation factor G a second chance to translocate the tRNAs correctly. Binds to ribosomes in a GTP-dependent manner. This Synechococcus sp. (strain RCC307) protein is Elongation factor 4.